Consider the following 388-residue polypeptide: CUE domain-containing protein 1 (388 aa).

Residues 1 to 10 (MTSLFRRSSS) show a composition bias toward low complexity. A disordered region spans residues 1-45 (MTSLFRRSSSGSGGGGATGARGAGTGAGDGSTAPQELNNSRPARQ). Gly residues predominate over residues 11-29 (GSGGGGATGARGAGTGAGD). The region spanning 50–93 (EFNQAMDDFKTMFPNMDYDIIECVLRANSGAVDATIDQLLQMNL) is the CUE domain. 4 disordered regions span residues 152-178 (PTPP…WNPP), 196-225 (DSIQ…ACDQ), 270-302 (SQKS…TVSE), and 369-388 (DFRG…REGQ). Polar residues predominate over residues 290–300 (VPGTSETNPTV).

The polypeptide is CUE domain-containing protein 1 (Cuedc1) (Mus musculus (Mouse)).